Here is a 283-residue protein sequence, read N- to C-terminus: 1-acyl-sn-glycerol-3-phosphate acyltransferase alpha (283 aa).

Positions 1-26 are cleaved as a signal peptide; it reads MDLWPGAWMLLLLLFLLLLFLLPTLW. Topologically, residues 27 to 37 are lumenal; the sequence is FCSPSAKYFFK. Residues 38–58 form a helical membrane-spanning segment; the sequence is MAFYNGWILFLAVLAIPVCAV. The Cytoplasmic portion of the chain corresponds to 59–127; sequence RGRNVENMKI…PGRCVPIAKR (69 aa). Residues 104-109 carry the HXXXXD motif motif; the sequence is HQSSLD. The helical transmembrane segment at 128 to 148 threads the bilayer; the sequence is ELLWAGSAGLACWLAGVIFID. At 149–283 the chain is on the lumenal side; sequence RKRTGDAISV…DYLKKPGGGG (135 aa). The short motif at 178–181 is the EGTR motif element; sequence EGTR.

The protein belongs to the 1-acyl-sn-glycerol-3-phosphate acyltransferase family. In terms of tissue distribution, widely expressed. Expressed in adipose tissue and at high levels in testis and pancreas. Expressed at lower levels in tissues such as heart, brain, placenta, kidney, lung, spleen, thymus, prostate, ovary, intestine, colon, leukocyte and liver.

It is found in the endoplasmic reticulum membrane. The catalysed reaction is a 1-acyl-sn-glycero-3-phosphate + an acyl-CoA = a 1,2-diacyl-sn-glycero-3-phosphate + CoA. It catalyses the reaction 1-(9Z-octadecenoyl)-sn-glycero-3-phosphate + (9Z)-octadecenoyl-CoA = 1,2-di-(9Z-octadecenoyl)-sn-glycero-3-phosphate + CoA. The enzyme catalyses 1-(9Z-octadecenoyl)-sn-glycero-3-phosphate + hexadecanoyl-CoA = 1-(9Z)-octadecenoyl-2-hexadecanoyl-sn-glycero-3-phosphate + CoA. It carries out the reaction heptadecanoyl-CoA + 1-(9Z-octadecenoyl)-sn-glycero-3-phosphate = 1-(9Z)-octadecenoyl-2-heptadecanoyl-sn-glycero-3-phosphate + CoA. The catalysed reaction is 1-(9Z-octadecenoyl)-sn-glycero-3-phosphate + octadecanoyl-CoA = 1-(9Z-octadecenoyl)-2-octadecanoyl-sn-glycero-3-phosphate + CoA. It catalyses the reaction 1-(9Z-octadecenoyl)-sn-glycero-3-phosphate + (9Z,12Z)-octadecadienoyl-CoA = 1-(9Z)-octadecenoyl-2-(9Z,12Z)-octadecadienoyl-sn-glycero-3-phosphate + CoA. The enzyme catalyses 1-(9Z-octadecenoyl)-sn-glycero-3-phosphate + tetradecanoyl-CoA = 1-(9Z)-octadecenoyl-2-tetradecanoyl-sn-glycero-3-phosphate + CoA. It carries out the reaction pentadecanoyl-CoA + 1-(9Z-octadecenoyl)-sn-glycero-3-phosphate = 1-(9Z)-octadecenoyl-2-pentadecanoyl-sn-glycero-3-phosphate + CoA. The catalysed reaction is 1-hexadecanoyl-sn-glycero-3-phosphate + (9Z)-octadecenoyl-CoA = 1-hexadecanoyl-2-(9Z-octadecenoyl)-sn-glycero-3-phosphate + CoA. It catalyses the reaction 1-(9Z,12Z,15Z)-octadecatrienoyl-sn-glycero-3-phosphate + (9Z)-octadecenoyl-CoA = 1-(9Z,12Z,15Z)-octadecatrienoyl-2-(9Z)-octadecenoyl-sn-glycero-3-phosphate + CoA. The enzyme catalyses 1-(6Z,9Z,12Z-octadecatrienoyl)-sn-glycero-3-phosphate + (9Z)-octadecenoyl-CoA = (6Z,9Z,12Z)-octadecatrienoyl-2-(9Z)-octadecenoyl-sn-glycero-3-phosphate + CoA. It carries out the reaction 1-eicosanoyl-sn-glycero-3-phosphate + (9Z)-octadecenoyl-CoA = 1-eicosanoyl-2-(9Z)-octadecenoyl-sn-glycero-3-phosphate + CoA. The catalysed reaction is 1-tetradecanoyl-sn-glycerol 3-phosphate + (9Z)-octadecenoyl-CoA = 1-tetradecanoyl-2-(9Z)-octadecenoyl-sn-glycero-3-phosphate + CoA. It catalyses the reaction 1-(9Z-octadecenoyl)-sn-glycero-3-phosphate + (5Z,8Z,11Z,14Z)-eicosatetraenoyl-CoA = 1-(9Z)-octadecenoyl-2-(5Z,8Z,11Z,14Z)-eicosatetraenoyl-sn-glycero-3-phosphate + CoA. The enzyme catalyses 1-(9Z-octadecenoyl)-sn-glycero-3-phosphate + dodecanoyl-CoA = 1-(9Z)-octadecenoyl-2-dodecanoyl-sn-glycero-3-phosphate + CoA. It carries out the reaction (6Z)-octadecenoyl-CoA + 1-(9Z-octadecenoyl)-sn-glycero-3-phosphate = 1-(9Z)-octadecenoyl-2-(6Z)-octadecenoyl-sn-glycero-3-phosphate + CoA. The catalysed reaction is (11Z)-octadecenoyl-CoA + 1-(9Z-octadecenoyl)-sn-glycero-3-phosphate = 1-(9Z)-octadecenoyl-2-(11Z)-octadecenoyl-sn-glycero-3-phosphate + CoA. It catalyses the reaction (9Z)-hexadecenoyl-CoA + 1-(9Z-octadecenoyl)-sn-glycero-3-phosphate = 1-(9Z-octadecenoyl)-2-(9Z-hexadecenoyl)-sn-glycero-3-phosphate + CoA. Its pathway is phospholipid metabolism; CDP-diacylglycerol biosynthesis; CDP-diacylglycerol from sn-glycerol 3-phosphate: step 2/3. Its function is as follows. Converts 1-acyl-sn-glycerol-3-phosphate (lysophosphatidic acid or LPA) into 1,2-diacyl-sn-glycerol-3-phosphate (phosphatidic acid or PA) by incorporating an acyl moiety at the sn-2 position of the glycerol backbone. The sequence is that of 1-acyl-sn-glycerol-3-phosphate acyltransferase alpha (AGPAT1) from Homo sapiens (Human).